We begin with the raw amino-acid sequence, 473 residues long: Serine palmitoyltransferase 1 (473 aa).

Residues 1 to 66 (MATATEQWVL…KEELIEEWQP (66 aa)) are interaction with SPTLC2. The chain crosses the membrane as a helical span at residues 16–36 (ALYEAPAYHLILEGILILWII). Position 164 is a phosphotyrosine; by ABL (Y164).

This sequence belongs to the class-II pyridoxal-phosphate-dependent aminotransferase family. In terms of assembly, component of the serine palmitoyltransferase (SPT) complex, which is also composed of SPTLC2 or SPTLC3 and SPTSSA or SPTSSB. The heterodimer with SPTLC2 or SPTLC3 forms the catalytic core of the enzyme, while SPTSSA or SPTSSB subunits determine substrate specificity. SPT also interacts with ORMDL proteins, especially ORMDL3, which negatively regulate SPT activity in the presence of ceramides. Forms dimers of heterodimers with SPTLC2. Interacts with RTN4. The cofactor is pyridoxal 5'-phosphate. Phosphorylation at Tyr-164 inhibits activity and promotes cell survival.

It localises to the endoplasmic reticulum membrane. The enzyme catalyses L-serine + hexadecanoyl-CoA + H(+) = 3-oxosphinganine + CO2 + CoA. It carries out the reaction octadecanoyl-CoA + L-serine + H(+) = 3-oxoeicosasphinganine + CO2 + CoA. The catalysed reaction is tetradecanoyl-CoA + L-serine + H(+) = 3-oxohexadecasphinganine + CO2 + CoA. It catalyses the reaction dodecanoyl-CoA + L-serine + H(+) = 3-oxotetradecasphinganine + CO2 + CoA. Its pathway is lipid metabolism; sphingolipid metabolism. With respect to regulation, SPT complex catalytic activity is negatively regulated by ORMDL proteins, including ORMDL3, in the presence of ceramides. This mechanism allows to maintain ceramide levels at sufficient concentrations for the production of complex sphingolipids, but which prevents the accumulation of ceramides to levels that trigger apoptosis. In terms of biological role, component of the serine palmitoyltransferase multisubunit enzyme (SPT) that catalyzes the initial and rate-limiting step in sphingolipid biosynthesis by condensing L-serine and activated acyl-CoA (most commonly palmitoyl-CoA) to form long-chain bases. The SPT complex is also composed of SPTLC2 or SPTLC3 and SPTSSA or SPTSSB. Within this complex, the heterodimer with SPTLC2 or SPTLC3 forms the catalytic core. The composition of the serine palmitoyltransferase (SPT) complex determines the substrate preference. The SPTLC1-SPTLC2-SPTSSA complex shows a strong preference for C16-CoA substrate, while the SPTLC1-SPTLC3-SPTSSA isozyme uses both C14-CoA and C16-CoA as substrates, with a slight preference for C14-CoA. The SPTLC1-SPTLC2-SPTSSB complex shows a strong preference for C18-CoA substrate, while the SPTLC1-SPTLC3-SPTSSB isozyme displays an ability to use a broader range of acyl-CoAs, without apparent preference. Required for adipocyte cell viability and metabolic homeostasis. The chain is Serine palmitoyltransferase 1 (SPTLC1) from Pongo abelii (Sumatran orangutan).